The chain runs to 456 residues: 3-isopropylmalate dehydratase large subunit (456 aa).

[4Fe-4S] cluster is bound by residues Cys336, Cys396, and Cys399.

Belongs to the aconitase/IPM isomerase family. LeuC type 1 subfamily. Heterodimer of LeuC and LeuD. The cofactor is [4Fe-4S] cluster.

The enzyme catalyses (2R,3S)-3-isopropylmalate = (2S)-2-isopropylmalate. It functions in the pathway amino-acid biosynthesis; L-leucine biosynthesis; L-leucine from 3-methyl-2-oxobutanoate: step 2/4. Its function is as follows. Catalyzes the isomerization between 2-isopropylmalate and 3-isopropylmalate, via the formation of 2-isopropylmaleate. This chain is 3-isopropylmalate dehydratase large subunit, found in Staphylococcus aureus (strain JH1).